The following is a 672-amino-acid chain: tRNA 5-methylaminomethyl-2-thiouridine biosynthesis bifunctional protein MnmC (672 aa).

The tract at residues 1 to 235 (MTRVLEPAEP…KRDMTVARFA (235 aa)) is tRNA (mnm(5)s(2)U34)-methyltransferase. The segment at 259 to 672 (IGAGLAGCAV…SAGPGVDAAG (414 aa)) is FAD-dependent cmnm(5)s(2)U34 oxidoreductase.

In the N-terminal section; belongs to the methyltransferase superfamily. tRNA (mnm(5)s(2)U34)-methyltransferase family. This sequence in the C-terminal section; belongs to the DAO family. The cofactor is FAD.

The protein localises to the cytoplasm. The catalysed reaction is 5-aminomethyl-2-thiouridine(34) in tRNA + S-adenosyl-L-methionine = 5-methylaminomethyl-2-thiouridine(34) in tRNA + S-adenosyl-L-homocysteine + H(+). Its function is as follows. Catalyzes the last two steps in the biosynthesis of 5-methylaminomethyl-2-thiouridine (mnm(5)s(2)U) at the wobble position (U34) in tRNA. Catalyzes the FAD-dependent demodification of cmnm(5)s(2)U34 to nm(5)s(2)U34, followed by the transfer of a methyl group from S-adenosyl-L-methionine to nm(5)s(2)U34, to form mnm(5)s(2)U34. In Cupriavidus metallidurans (strain ATCC 43123 / DSM 2839 / NBRC 102507 / CH34) (Ralstonia metallidurans), this protein is tRNA 5-methylaminomethyl-2-thiouridine biosynthesis bifunctional protein MnmC.